A 124-amino-acid polypeptide reads, in one-letter code: Small ribosomal subunit protein uS12 (124 aa).

Position 89 is a 3-methylthioaspartic acid (aspartate 89).

The protein belongs to the universal ribosomal protein uS12 family. Part of the 30S ribosomal subunit. Contacts proteins S8 and S17. May interact with IF1 in the 30S initiation complex.

With S4 and S5 plays an important role in translational accuracy. Its function is as follows. Interacts with and stabilizes bases of the 16S rRNA that are involved in tRNA selection in the A site and with the mRNA backbone. Located at the interface of the 30S and 50S subunits, it traverses the body of the 30S subunit contacting proteins on the other side and probably holding the rRNA structure together. The combined cluster of proteins S8, S12 and S17 appears to hold together the shoulder and platform of the 30S subunit. This Nitratiruptor sp. (strain SB155-2) protein is Small ribosomal subunit protein uS12.